The following is a 224-amino-acid chain: Orotate phosphoribosyltransferase (224 aa).

K29 is a binding site for 5-phospho-alpha-D-ribose 1-diphosphate. F37–F38 serves as a coordination point for orotate. Residues Y75–K76, R105, K106, K109, H111, and D130–S138 contribute to the 5-phospho-alpha-D-ribose 1-diphosphate site. Residues T134 and R162 each coordinate orotate.

This sequence belongs to the purine/pyrimidine phosphoribosyltransferase family. PyrE subfamily. As to quaternary structure, homodimer. Mg(2+) serves as cofactor.

The enzyme catalyses orotidine 5'-phosphate + diphosphate = orotate + 5-phospho-alpha-D-ribose 1-diphosphate. The protein operates within pyrimidine metabolism; UMP biosynthesis via de novo pathway; UMP from orotate: step 1/2. Its function is as follows. Catalyzes the transfer of a ribosyl phosphate group from 5-phosphoribose 1-diphosphate to orotate, leading to the formation of orotidine monophosphate (OMP). In Bordetella pertussis (strain Tohama I / ATCC BAA-589 / NCTC 13251), this protein is Orotate phosphoribosyltransferase.